The sequence spans 260 residues: MTILSEIVDYKEQLLKDGYYHDKLQNLKGVKHKNKSRLTDALIKNDNLTLIAEIKSKSPSVKAFQQTNIIKQVSDYERYGANAISVLTDERYFGGSFERLQQISETTQLPVLCKDFIIDPLQIDVAQKAGASIILLIVNILTDEKLRQLYQYASSKGLEVLVEVHDGIELQRAYQLNPQIIGVNNRDLKSFNTDVKHTNQILKCKKENYLYISESGIHSQQEVKQIVKSGIDGLLVGGALMNCNELEHFIPSLKLKKVKQ.

Belongs to the TrpC family.

The catalysed reaction is 1-(2-carboxyphenylamino)-1-deoxy-D-ribulose 5-phosphate + H(+) = (1S,2R)-1-C-(indol-3-yl)glycerol 3-phosphate + CO2 + H2O. Its pathway is amino-acid biosynthesis; L-tryptophan biosynthesis; L-tryptophan from chorismate: step 4/5. The chain is Indole-3-glycerol phosphate synthase from Staphylococcus haemolyticus (strain JCSC1435).